A 240-amino-acid polypeptide reads, in one-letter code: Lipoprotein-releasing system ATP-binding protein LolD (240 aa).

The 226-residue stretch at 15–240 (IRAERLGKTY…GLRELTSAEV (226 aa)) folds into the ABC transporter domain. 51–58 (GASGAGKS) is an ATP binding site.

It belongs to the ABC transporter superfamily. Lipoprotein translocase (TC 3.A.1.125) family. In terms of assembly, the complex is composed of two ATP-binding proteins (LolD) and two transmembrane proteins (LolC and LolE).

Its subcellular location is the cell inner membrane. Functionally, part of the ABC transporter complex LolCDE involved in the translocation of mature outer membrane-directed lipoproteins, from the inner membrane to the periplasmic chaperone, LolA. Responsible for the formation of the LolA-lipoprotein complex in an ATP-dependent manner. The polypeptide is Lipoprotein-releasing system ATP-binding protein LolD (Xylella fastidiosa (strain 9a5c)).